Here is a 1025-residue protein sequence, read N- to C-terminus: Multidrug resistance protein MdtC (1025 aa).

The next 12 helical transmembrane spans lie at 3 to 23 (FFAL…AITL), 333 to 353 (EVEQ…FLFL), 360 to 380 (IIPA…MYLC), 387 to 407 (LSLM…IVVL), 431 to 451 (VGFT…PLLL), 463 to 483 (FAVT…TLTP), 528 to 548 (LVGV…ISIP), 853 to 873 (VILI…LYES), 875 to 895 (VHPL…LLAL), 897 to 917 (LFNA…IGIV), 953 to 973 (PIMM…LSGG), and 984 to 1004 (ITIV…TPVV).

The protein belongs to the resistance-nodulation-cell division (RND) (TC 2.A.6) family. MdtC subfamily. Part of a tripartite efflux system composed of MdtA, MdtB and MdtC. MdtC forms a heteromultimer with MdtB.

The protein localises to the cell inner membrane. In terms of biological role, the MdtABC tripartite complex confers resistance against novobiocin and deoxycholate. In Escherichia coli (strain ATCC 8739 / DSM 1576 / NBRC 3972 / NCIMB 8545 / WDCM 00012 / Crooks), this protein is Multidrug resistance protein MdtC.